We begin with the raw amino-acid sequence, 821 residues long: Putative outer membrane usher protein YqiG (821 aa).

The signal sequence occupies residues 1 to 20 (MSGNIGANPVIIIGCASAYA). The cysteines at positions 798 and 817 are disulfide-linked.

The protein belongs to the fimbrial export usher family.

Its subcellular location is the cell outer membrane. In terms of biological role, may be involved in H(2) production during fermentative growth. Involved in the export and assembly of a fimbrial subunit across the outer membrane. This is Putative outer membrane usher protein YqiG (yqiG) from Escherichia coli (strain K12).